The sequence spans 614 residues: Threonine--tRNA ligase (614 aa).

Residues 1 to 138 (MRTLMIHSDY…HPLSELSRTI (138 aa)) form an editing domain region. Residues 133-157 (ELSRTITTEPEEESEDSEEEPSEPS) are disordered. Positions 141-154 (EPEEESEDSEEEPS) are enriched in acidic residues. Positions 200-495 (PHVRLMREKE…TDKGNKPSLP (296 aa)) are catalytic. Zn(2+) contacts are provided by cysteine 292, histidine 344, and histidine 466.

It belongs to the class-II aminoacyl-tRNA synthetase family. Homodimer. The cofactor is Zn(2+).

The protein localises to the cytoplasm. It catalyses the reaction tRNA(Thr) + L-threonine + ATP = L-threonyl-tRNA(Thr) + AMP + diphosphate + H(+). Functionally, catalyzes the attachment of threonine to tRNA(Thr) in a two-step reaction: L-threonine is first activated by ATP to form Thr-AMP and then transferred to the acceptor end of tRNA(Thr). Also edits incorrectly charged L-seryl-tRNA(Thr). This Methanosphaera stadtmanae (strain ATCC 43021 / DSM 3091 / JCM 11832 / MCB-3) protein is Threonine--tRNA ligase.